We begin with the raw amino-acid sequence, 274 residues long: Putative HTH-type transcriptional regulator RmpR (274 aa).

The HTH gntR-type domain maps to 18-88; that stretch reads IERADAIVER…RSGGTFVVNQ (71 aa). The segment at residues 46–65 is a DNA-binding region (H-T-H motif); it reads EAALSEMFGVGGATLREALS. Polar residues predominate over residues 250–265; that stretch reads SRPSSPATAPDGSSSA. Residues 250–274 are disordered; sequence SRPSSPATAPDGSSSAEAAMIQEGQ.

In terms of biological role, may regulate the transcription of the rmpAB operon. The chain is Putative HTH-type transcriptional regulator RmpR (rmpR) from Mycobacterium gastri.